Consider the following 546-residue polypeptide: Protein RDR1 (546 aa).

The segment at residues 20–46 (CVPCRERKRKCNGKSPCEMCVAYGYVC) is a DNA-binding region (zn(2)-C6 fungal-type).

The protein resides in the nucleus. Functionally, transcriptional repressor of multidrug resistance genes, such as PDR5. Required for growth on non-fermentable carbon sources like lactate or glycerol. The sequence is that of Protein RDR1 (RDR1) from Saccharomyces cerevisiae (strain ATCC 204508 / S288c) (Baker's yeast).